We begin with the raw amino-acid sequence, 396 residues long: 1-deoxy-D-xylulose 5-phosphate reductoisomerase (396 aa).

NADPH contacts are provided by T10, G11, S12, I13, and N123. K124 provides a ligand contact to 1-deoxy-D-xylulose 5-phosphate. Residue E125 coordinates NADPH. D149 contributes to the Mn(2+) binding site. Residues S150, E151, S185, and H208 each coordinate 1-deoxy-D-xylulose 5-phosphate. Residue E151 coordinates Mn(2+). G214 is an NADPH binding site. Residues S221, N226, K227, and E230 each contribute to the 1-deoxy-D-xylulose 5-phosphate site. Residue E230 coordinates Mn(2+).

The protein belongs to the DXR family. Mg(2+) serves as cofactor. It depends on Mn(2+) as a cofactor.

The enzyme catalyses 2-C-methyl-D-erythritol 4-phosphate + NADP(+) = 1-deoxy-D-xylulose 5-phosphate + NADPH + H(+). It functions in the pathway isoprenoid biosynthesis; isopentenyl diphosphate biosynthesis via DXP pathway; isopentenyl diphosphate from 1-deoxy-D-xylulose 5-phosphate: step 1/6. Catalyzes the NADPH-dependent rearrangement and reduction of 1-deoxy-D-xylulose-5-phosphate (DXP) to 2-C-methyl-D-erythritol 4-phosphate (MEP). This is 1-deoxy-D-xylulose 5-phosphate reductoisomerase from Shewanella frigidimarina (strain NCIMB 400).